A 369-amino-acid chain; its full sequence is Anhydro-N-acetylmuramic acid kinase (369 aa).

12-19 (GTSLDGVD) is an ATP binding site.

Belongs to the anhydro-N-acetylmuramic acid kinase family.

It catalyses the reaction 1,6-anhydro-N-acetyl-beta-muramate + ATP + H2O = N-acetyl-D-muramate 6-phosphate + ADP + H(+). The protein operates within amino-sugar metabolism; 1,6-anhydro-N-acetylmuramate degradation. It functions in the pathway cell wall biogenesis; peptidoglycan recycling. Functionally, catalyzes the specific phosphorylation of 1,6-anhydro-N-acetylmuramic acid (anhMurNAc) with the simultaneous cleavage of the 1,6-anhydro ring, generating MurNAc-6-P. Is required for the utilization of anhMurNAc either imported from the medium or derived from its own cell wall murein, and thus plays a role in cell wall recycling. This Escherichia coli O8 (strain IAI1) protein is Anhydro-N-acetylmuramic acid kinase.